The primary structure comprises 444 residues: tRNA (guanine-N(7)-)-methyltransferase non-catalytic subunit TRM82 (444 aa).

WD repeat units lie at residues 1–47 (MSVI…WSDD), 48–99 (FDKI…LGAP), 100–147 (PIYS…KRFC), 148–192 (FSKR…EPIL), 193–237 (GHVS…DKWL), 238–279 (FGHK…STFD), and 308–354 (FAVS…ITFP). Residues 55-92 (RNTTAKEQQGQSSENENENKKLKSNKGDSIKRTAAKVP) are disordered. The segment covering 71–85 (NENKKLKSNKGDSIK) has biased composition (basic and acidic residues). Serine 93 is modified (phosphoserine).

It belongs to the WD repeat TRM82 family. Forms a heterodimer with the catalytic subunit TRM8.

It localises to the nucleus. It participates in tRNA modification; N(7)-methylguanine-tRNA biosynthesis. In terms of biological role, required for the formation of N(7)-methylguanine at position 46 (m7G46) in tRNA, a modification required to maintain stability of tRNAs; its absence resulting in tRNA decay. In the complex, it is required to stabilize and induce conformational changes of the catalytic subunit. The sequence is that of tRNA (guanine-N(7)-)-methyltransferase non-catalytic subunit TRM82 from Saccharomyces cerevisiae (strain RM11-1a) (Baker's yeast).